We begin with the raw amino-acid sequence, 117 residues long: Probable prefoldin subunit 1 (117 aa).

The protein belongs to the prefoldin subunit beta family. In terms of assembly, heterohexamer of two PFD-alpha type and four PFD-beta type subunits. Expressed in the distal cell tip of developing embryos.

The protein resides in the cytoplasm. Its function is as follows. Binds specifically to cytosolic chaperonin (c-CPN) and transfers target proteins to it. Binds to nascent polypeptide chain and promotes folding in an environment in which there are many competing pathways for nonnative proteins. Has a role in gonadogenesis. The sequence is that of Probable prefoldin subunit 1 (pfd-1) from Caenorhabditis elegans.